Reading from the N-terminus, the 150-residue chain is Large ribosomal subunit protein bL9 (150 aa).

It belongs to the bacterial ribosomal protein bL9 family.

Its function is as follows. Binds to the 23S rRNA. In Neisseria meningitidis serogroup C / serotype 2a (strain ATCC 700532 / DSM 15464 / FAM18), this protein is Large ribosomal subunit protein bL9.